A 431-amino-acid chain; its full sequence is Enolase (431 aa).

Position 167 (Gln-167) interacts with (2R)-2-phosphoglycerate. Residue Glu-209 is the Proton donor of the active site. Mg(2+) contacts are provided by Asp-246, Glu-290, and Asp-317. 4 residues coordinate (2R)-2-phosphoglycerate: Lys-342, Arg-371, Ser-372, and Lys-393. Lys-342 acts as the Proton acceptor in catalysis.

The protein belongs to the enolase family. In terms of assembly, component of the RNA degradosome, a multiprotein complex involved in RNA processing and mRNA degradation. Requires Mg(2+) as cofactor.

It localises to the cytoplasm. Its subcellular location is the secreted. The protein resides in the cell surface. The enzyme catalyses (2R)-2-phosphoglycerate = phosphoenolpyruvate + H2O. It participates in carbohydrate degradation; glycolysis; pyruvate from D-glyceraldehyde 3-phosphate: step 4/5. Catalyzes the reversible conversion of 2-phosphoglycerate (2-PG) into phosphoenolpyruvate (PEP). It is essential for the degradation of carbohydrates via glycolysis. This chain is Enolase, found in Yersinia pseudotuberculosis serotype O:1b (strain IP 31758).